Reading from the N-terminus, the 293-residue chain is NAD kinase (293 aa).

Catalysis depends on D72, which acts as the Proton acceptor. Residues 72 to 73 (DG), 146 to 147 (ND), R157, K174, D176, 187 to 192 (TAYALS), and Q247 each bind NAD(+).

The protein belongs to the NAD kinase family. The cofactor is a divalent metal cation.

It localises to the cytoplasm. It catalyses the reaction NAD(+) + ATP = ADP + NADP(+) + H(+). In terms of biological role, involved in the regulation of the intracellular balance of NAD and NADP, and is a key enzyme in the biosynthesis of NADP. Catalyzes specifically the phosphorylation on 2'-hydroxyl of the adenosine moiety of NAD to yield NADP. The protein is NAD kinase of Marinomonas sp. (strain MWYL1).